A 293-amino-acid chain; its full sequence is Probable endoribonuclease YicC (293 aa).

It belongs to the YicC/YloC family. A divalent metal cation is required as a cofactor.

Its function is as follows. Negatively modulates sporulation, probably in response to nutrient conditions. Effects expression of sporulation regulator spo0A in an indirect manner, possibly via repression of the sinRR' operon. Functionally, probably a ssRNA endonuclease. In terms of biological role, might contribute to small RNA (sRNA) regulation. This is Probable endoribonuclease YicC from Clostridioides difficile (strain 630) (Peptoclostridium difficile).